The chain runs to 287 residues: ATP synthase gamma chain (287 aa).

It belongs to the ATPase gamma chain family. As to quaternary structure, F-type ATPases have 2 components, CF(1) - the catalytic core - and CF(0) - the membrane proton channel. CF(1) has five subunits: alpha(3), beta(3), gamma(1), delta(1), epsilon(1). CF(0) has three main subunits: a, b and c.

It localises to the cell inner membrane. Functionally, produces ATP from ADP in the presence of a proton gradient across the membrane. The gamma chain is believed to be important in regulating ATPase activity and the flow of protons through the CF(0) complex. The protein is ATP synthase gamma chain of Salmonella gallinarum (strain 287/91 / NCTC 13346).